A 20-amino-acid polypeptide reads, in one-letter code: 2-oxo-acid reductase (20 aa).

This sequence belongs to the AOR/FOR family. As to quaternary structure, forms various types of homooligomers. [4Fe-4S] cluster is required as a cofactor. Requires Mo-molybdopterin as cofactor.

The protein resides in the cell membrane. It carries out the reaction a (2R)-2-hydroxycarboxylate + A = a 2-oxocarboxylate + AH2. With respect to regulation, is inhibited by cyanide. Is sensitive to oxygen. In terms of biological role, oxidoreductase with an extremely broad substrate specificity that can reduce reversibly 2-oxocarboxylates to (2R)-hydroxycarboxylates. The chain is 2-oxo-acid reductase from Proteus hauseri.